The following is a 206-amino-acid chain: Large ribosomal subunit protein uL3 (206 aa).

The tract at residues 127 to 151 (SGGPSSHGSKFHRHLGGTGQATTPA) is disordered.

It belongs to the universal ribosomal protein uL3 family. Part of the 50S ribosomal subunit. Forms a cluster with proteins L14 and L19.

One of the primary rRNA binding proteins, it binds directly near the 3'-end of the 23S rRNA, where it nucleates assembly of the 50S subunit. This Borreliella afzelii (strain PKo) (Borrelia afzelii) protein is Large ribosomal subunit protein uL3.